The following is a 147-amino-acid chain: Large ribosomal subunit protein uL22c (147 aa).

It belongs to the universal ribosomal protein uL22 family. In terms of assembly, part of the 50S ribosomal subunit.

The protein resides in the plastid. It is found in the chloroplast. In terms of biological role, this protein binds specifically to 23S rRNA. Its function is as follows. The globular domain of the protein is located near the polypeptide exit tunnel on the outside of the subunit, while an extended beta-hairpin is found that lines the wall of the exit tunnel in the center of the 70S ribosome. This Lolium perenne (Perennial ryegrass) protein is Large ribosomal subunit protein uL22c (rpl22).